The chain runs to 592 residues: NADH-quinone oxidoreductase subunit C/D (592 aa).

The interval 1-183 (MLTEFNSIPA…GPYILTEEKE (183 aa)) is NADH dehydrogenase I subunit C. Residues 207-592 (DFMFLNLGPN…IDFVMADVDR (386 aa)) are NADH dehydrogenase I subunit D.

The protein in the N-terminal section; belongs to the complex I 30 kDa subunit family. In the C-terminal section; belongs to the complex I 49 kDa subunit family. NDH-1 is composed of 13 different subunits. Subunits NuoB, CD, E, F, and G constitute the peripheral sector of the complex.

Its subcellular location is the cell inner membrane. The enzyme catalyses a quinone + NADH + 5 H(+)(in) = a quinol + NAD(+) + 4 H(+)(out). NDH-1 shuttles electrons from NADH, via FMN and iron-sulfur (Fe-S) centers, to quinones in the respiratory chain. The immediate electron acceptor for the enzyme in this species is believed to be ubiquinone. Couples the redox reaction to proton translocation (for every two electrons transferred, four hydrogen ions are translocated across the cytoplasmic membrane), and thus conserves the redox energy in a proton gradient. In Acidiphilium cryptum (strain JF-5), this protein is NADH-quinone oxidoreductase subunit C/D.